A 507-amino-acid polypeptide reads, in one-letter code: Secreted lipase ARB_01498 (507 aa).

Positions methionine 1–alanine 21 are cleaved as a signal peptide. The active-site Acyl-ester intermediate is serine 196. Residues asparagine 262, asparagine 321, asparagine 358, and asparagine 416 are each glycosylated (N-linked (GlcNAc...) asparagine).

Belongs to the type-B carboxylesterase/lipase family.

It localises to the secreted. The catalysed reaction is a triacylglycerol + H2O = a diacylglycerol + a fatty acid + H(+). The sequence is that of Secreted lipase ARB_01498 from Arthroderma benhamiae (strain ATCC MYA-4681 / CBS 112371) (Trichophyton mentagrophytes).